The primary structure comprises 873 residues: MFGFIKKVLDFFGVDQSEDNPSETAVETTDVSTKIKTTDTTQEESSVKTKTVVPTQPGGSVKPETIAPDQQKKHQIKTETTTSTTKQKGPKVTLMDGHVKQYYFARRGETSTHDTSLPPPVKVLSGRSIPLKEIPFEATRNELVQIYLTSIDKLIKSNKLNSIPSQQIASHYLFLRSLANSETDGIKKNQILSLAKPLGTYLASKEPHVWKMINELIEKSEYPIIHYLKNNRAHSNFMLALIHEYHKEPLTKNQSAFVQKFRDSSVFLFPNPIYTAWLAHSYDEDSSFNPMFRERLSTNFYHSTLTDNLLLRTEPKEVTLSSEHHYKKEKGPIDSSFRYQMSSDRLLRIQGRTLLFSTPQNDVVAVKVQKKGEPKSTLEEEFEMADYLLKHQRRLDVHSKLPQPLGQYSVKKSEILEISRGSLDFERFKTLIDDSKDLEVYVYKAPQSYFTYLHDKNQDLEDLTASVKTNVHDLFVLLREGIVFPQLADIFHTHFGEDEREDKGRYQALVQLLNVLQFQLGRIDKWQKAVEYVNLRSSGLADLGDSLPITSLFTSSDFTKHYFSELLTGGYHPTFFDKSSGTANSLFTGKRRLFGNYLYLNTIAEYLLVIQLTLGSYGDKVTRDMMDKPKKEAVWRELANVMFTSCAEAIHIMTGIPQSRALTLLKQRANIEKHFRQTQFWMTPDYSKLDEDTLQMEQYSIYSGEPEYEFTDKLVSGVGLSVDGVHQDLGGYNRESPLRELEKLLYATVTLIEGTMQLDKEFFKQLEQVEKILSGEIKTDANSCFEAVAQLLDLARPGCHFQKRLVLSYYEEAKLKYPSAPTDAYDSRFQVVARTNAAITIQRFWREARKNLSEKSDIDSEKPESERTTDKRL.

The disordered stretch occupies residues glutamine 16 to proline 90. The span at serine 22–glycine 58 shows a compositional bias: polar residues. The Mg(2+) site is built by aspartate 542 and aspartate 545. The disordered stretch occupies residues asparagine 851–leucine 873.

As to quaternary structure, interacts with host calmodulin/CALM1; this interaction is required for glutamylase activity. The cofactor is Mg(2+).

It catalyses the reaction L-glutamyl-[protein] + L-glutamate + ATP = gamma-L-glutamyl-L-glutamyl-[protein] + ADP + phosphate + H(+). The enzyme catalyses (L-glutamyl)(n)-gamma-L-glutamyl-L-glutamyl-[protein] + L-glutamate + ATP = (L-glutamyl)(n+1)-gamma-L-glutamyl-L-glutamyl-[protein] + ADP + phosphate + H(+). Its activity is regulated as follows. Glytamylation catalyzed by SidJ requires host calmodulin and can be regulated by intracellular changes in Ca2+ concentrations. Also requires ATP. Functionally, glutamylase that mediates the covalent attachment of glutamate moieties to SdeA on one of the catalytic residues that is required for its mono-ADP-ribosyltransferase activity. In turn, inhibits SdeA ubiquitinating activity. Also glutamylates related SdeB, SdeC and SidE. Glutamylase activity only occurs in the host since it requires host calmodulin. May also reverse the SdeA-mediated substrate ubiquitination by cleaving the phosphodiester bond that links phosphoribosylated ubiquitin to protein substrates via its deubiquitinase activity. This chain is Calmodulin-dependent glutamylase SidJ, found in Legionella pneumophila subsp. pneumophila (strain Philadelphia 1 / ATCC 33152 / DSM 7513).